Reading from the N-terminus, the 1741-residue chain is S-layer protein (1741 aa).

Over residues 894-904 the composition is skewed to polar residues; it reads SFTSDSANGSG. The interval 894–913 is disordered; that stretch reads SFTSDSANGSGHSVEGGTGD.

In terms of processing, glycosylated.

The protein resides in the secreted. It localises to the cell wall. It is found in the S-layer. S-layer protein. The S-layer is a paracrystalline mono-layered assembly of proteins which coats the surface of bacteria. Under laboratory conditions, has a supportive but not a critical role in the function of the cyanobacterium. Shows no apparent hemolytic activity against sheep erythrocytes, however, a slight hemolytic activity is detected during the conformational change caused by the rebinding of Ca(2+). In Synechocystis sp. (strain ATCC 27184 / PCC 6803 / Kazusa), this protein is S-layer protein.